The primary structure comprises 476 residues: Hydrogenase-4 component F homolog (476 aa).

The next 12 membrane-spanning stretches (helical) occupy residues 1–21 (MSAA…SQIS), 25–45 (ISSW…LFLL), 54–74 (FFLV…IGFT), 120–140 (IGLM…MVGI), 153–173 (YFIL…LFYI), 202–222 (LVNI…GLFP), 235–255 (PTPI…YAIL), 270–290 (AGPL…LMFY), 307–327 (MGII…AGLL), 368–388 (LGWG…MGVF), 402–422 (SPLL…ALIL), and 442–462 (LYLP…YIPP).

This sequence belongs to the complex I subunit 5 family.

It localises to the cell inner membrane. The protein is Hydrogenase-4 component F homolog (hyfF) of Methylacidiphilum infernorum (isolate V4) (Methylokorus infernorum (strain V4)).